The primary structure comprises 196 residues: Large ribosomal subunit protein uL11m (196 aa).

The protein belongs to the universal ribosomal protein uL11 family. As to quaternary structure, component of the mitochondrial ribosome large subunit (39S) which comprises a 16S rRNA and about 50 distinct proteins.

Its subcellular location is the mitochondrion. This Drosophila melanogaster (Fruit fly) protein is Large ribosomal subunit protein uL11m (mRpL11).